The primary structure comprises 460 residues: Armadillo repeat-containing protein LFR (460 aa).

Residues 1-30 (MQKRELGKSGGNSGGSSGPPAKRGRPFGST) are disordered. Residues 8–17 (KSGGNSGGSS) show a composition bias toward gly residues. 3 ARM repeats span residues 227–269 (DNEV…NLAH), 323–362 (NEPF…NLVE), and 366–407 (DCRL…NLVS).

In terms of assembly, interacts with AS2. As to expression, expressed in roots, leaves, stems and flowers.

The protein resides in the nucleus. Involved in leaf and flower development. Plays roles in leaf development partly by associating with AS2 and repressing KNAT1/BP transcription. Required for the formation of anther cell layers and normal expression of genes that regulates anther development. The sequence is that of Armadillo repeat-containing protein LFR from Arabidopsis thaliana (Mouse-ear cress).